Here is a 275-residue protein sequence, read N- to C-terminus: NH(3)-dependent NAD(+) synthetase (275 aa).

G47–S54 serves as a coordination point for ATP. Residue D53 participates in Mg(2+) binding. R141 lines the deamido-NAD(+) pocket. T161 is a binding site for ATP. E166 contacts Mg(2+). 2 residues coordinate deamido-NAD(+): K174 and D181. ATP-binding residues include K190 and T212. Residue H261–K262 participates in deamido-NAD(+) binding.

It belongs to the NAD synthetase family. In terms of assembly, homodimer.

The enzyme catalyses deamido-NAD(+) + NH4(+) + ATP = AMP + diphosphate + NAD(+) + H(+). The protein operates within cofactor biosynthesis; NAD(+) biosynthesis; NAD(+) from deamido-NAD(+) (ammonia route): step 1/1. Its function is as follows. Catalyzes the ATP-dependent amidation of deamido-NAD to form NAD. Uses ammonia as a nitrogen source. This is NH(3)-dependent NAD(+) synthetase from Oceanobacillus iheyensis (strain DSM 14371 / CIP 107618 / JCM 11309 / KCTC 3954 / HTE831).